Reading from the N-terminus, the 314-residue chain is Probable cell division protein WhiA (314 aa).

Residues 274-308 (SLKELGEMVSTGPISKSGVNHRLRKLNDLADKIRN) constitute a DNA-binding region (H-T-H motif).

It belongs to the WhiA family.

Involved in cell division and chromosome segregation. The polypeptide is Probable cell division protein WhiA (Staphylococcus aureus (strain USA300)).